Here is a 178-residue protein sequence, read N- to C-terminus: MQDQDKYAEQAASMEEPASADAPAIVPTLEEQLAASQLQVQELQDSFLRAKAENENFRRRAQEDVTRAHKFAIEGFAEALVPVKDSLEMALQVDTPSIASLKEGVEMTLKQLSAAFEKNRLLEIKPQQGDKLDPMKHQAISVVPADQEANTIVSTLQKGYLIADRLLRPALVTVAQEK.

The interval 1–26 (MQDQDKYAEQAASMEEPASADAPAIV) is disordered.

Belongs to the GrpE family. Homodimer.

The protein resides in the cytoplasm. Its function is as follows. Participates actively in the response to hyperosmotic and heat shock by preventing the aggregation of stress-denatured proteins, in association with DnaK and GrpE. It is the nucleotide exchange factor for DnaK and may function as a thermosensor. Unfolded proteins bind initially to DnaJ; upon interaction with the DnaJ-bound protein, DnaK hydrolyzes its bound ATP, resulting in the formation of a stable complex. GrpE releases ADP from DnaK; ATP binding to DnaK triggers the release of the substrate protein, thus completing the reaction cycle. Several rounds of ATP-dependent interactions between DnaJ, DnaK and GrpE are required for fully efficient folding. This chain is Protein GrpE, found in Herminiimonas arsenicoxydans.